We begin with the raw amino-acid sequence, 537 residues long: Cytochrome P450 CYP12A2 (537 aa).

Cys-483 is a binding site for heme.

This sequence belongs to the cytochrome P450 family. It depends on heme as a cofactor.

The polypeptide is Cytochrome P450 CYP12A2 (CYP12A2) (Musca domestica (House fly)).